We begin with the raw amino-acid sequence, 101 residues long: Signal recognition particle 19 kDa protein (101 aa).

Belongs to the SRP19 family. In terms of assembly, part of the signal recognition particle protein translocation system, which is composed of SRP and FtsY. Archaeal SRP consists of a 7S RNA molecule of 300 nucleotides and two protein subunits: SRP54 and SRP19.

The protein localises to the cytoplasm. Functionally, involved in targeting and insertion of nascent membrane proteins into the cytoplasmic membrane. Binds directly to 7S RNA and mediates binding of the 54 kDa subunit of the SRP. The protein is Signal recognition particle 19 kDa protein of Methanosarcina acetivorans (strain ATCC 35395 / DSM 2834 / JCM 12185 / C2A).